Reading from the N-terminus, the 899-residue chain is Probable dipeptidyl-aminopeptidase B (899 aa).

2 disordered regions span residues 1–37 (MARKDKDNGPEFVPLTNRSHRSSASFSSTDSLSSDGS) and 51–84 (KITRTQLPEENPYRDDDVELERGDNIFSRPTENS). Topologically, residues 1–91 (MARKDKDNGP…ENSKRNRGSR (91 aa)) are cytoplasmic. Over residues 22–37 (SSASFSSTDSLSSDGS) the composition is skewed to low complexity. Residues 61-74 (NPYRDDDVELERGD) show a composition bias toward basic and acidic residues. A helical; Signal-anchor for type II membrane protein membrane pass occupies residues 92 to 112 (LIWVVGLLCLGGWILAFVLFW). Residues 113–899 (GRRNSELSSS…QQGNSVLPVT (787 aa)) lie on the Vacuolar side of the membrane. Residues N149, N194, N347, N409, N513, N638, and N643 are each glycosylated (N-linked (GlcNAc...) asparagine). The active-site Charge relay system is the S752. The N-linked (GlcNAc...) asparagine glycan is linked to N811. Catalysis depends on charge relay system residues D829 and H862.

It belongs to the peptidase S9B family.

The protein localises to the vacuole membrane. It catalyses the reaction Release of an N-terminal dipeptide, Xaa-Yaa-|-Zaa-, from a polypeptide, preferentially when Yaa is Pro, provided Zaa is neither Pro nor hydroxyproline.. In terms of biological role, type IV dipeptidyl-peptidase which removes N-terminal dipeptides sequentially from polypeptides having unsubstituted N-termini provided that the penultimate residue is proline. In Talaromyces marneffei (strain ATCC 18224 / CBS 334.59 / QM 7333) (Penicillium marneffei), this protein is Probable dipeptidyl-aminopeptidase B (dapB).